A 621-amino-acid polypeptide reads, in one-letter code: ATP-dependent lipid A-core flippase (621 aa).

5 helical membrane passes run 32–52, 91–111, 192–212, 286–306, and 312–332; these read IVAA…LAAF, VWGT…LVVI, IVLL…FPLL, SPFS…IALW, and YTTI…YAPI. Positions 33–344 constitute an ABC transmembrane type-1 domain; it reads VAALIAIFGV…LANISIPMQT (312 aa). The 234-residue stretch at 378–611 folds into the ABC transporter domain; it reads FRNVDVEYRS…NGYYTMLRNI (234 aa). 410 to 417 is a binding site for ATP; sequence GRSGSGKS.

This sequence belongs to the ABC transporter superfamily. Lipid exporter (TC 3.A.1.106) family. In terms of assembly, homodimer.

The protein localises to the cell inner membrane. The catalysed reaction is ATP + H2O + lipid A-core oligosaccharideSide 1 = ADP + phosphate + lipid A-core oligosaccharideSide 2.. In terms of biological role, involved in lipopolysaccharide (LPS) biosynthesis. Translocates lipid A-core from the inner to the outer leaflet of the inner membrane. Transmembrane domains (TMD) form a pore in the inner membrane and the ATP-binding domain (NBD) is responsible for energy generation. The sequence is that of ATP-dependent lipid A-core flippase from Neisseria meningitidis serogroup B (strain ATCC BAA-335 / MC58).